Reading from the N-terminus, the 432-residue chain is Pachytene checkpoint protein 2 homolog (432 aa).

At M1 the chain carries N-acetylmethionine. 179 to 186 (GPPGTGKT) is a binding site for ATP.

The protein belongs to the AAA ATPase family. PCH2 subfamily. As to quaternary structure, specifically interacts with the ligand binding domain of the thyroid receptor (TR). This interaction does not require the presence of thyroid hormone for its interaction. Interacts with proteasome subunit PSMA8; to participate in meiosis progression during spermatogenesis.

Plays a key role in chromosome recombination and chromosome structure development during meiosis. Required at early steps in meiotic recombination that leads to non-crossovers pathways. Also needed for efficient completion of homologous synapsis by influencing crossover distribution along the chromosomes affecting both crossovers and non-crossovers pathways. Also required for development of higher-order chromosome structures and is needed for synaptonemal-complex formation. In males, required for efficient synapsis of the sex chromosomes and for sex body formation. Promotes early steps of the DNA double-strand breaks (DSBs) repair process upstream of the assembly of RAD51 complexes. Required for depletion of HORMAD1 and HORMAD2 from synapsed chromosomes. In Canis lupus familiaris (Dog), this protein is Pachytene checkpoint protein 2 homolog (TRIP13).